A 124-amino-acid chain; its full sequence is Small ribosomal subunit protein uS12 (124 aa).

The interval 1–24 is disordered; that stretch reads MPTINQLIKKPRKSQKEKTASPAL. Residue D89 is modified to 3-methylthioaspartic acid.

It belongs to the universal ribosomal protein uS12 family. In terms of assembly, part of the 30S ribosomal subunit. Contacts proteins S8 and S17. May interact with IF1 in the 30S initiation complex.

Its function is as follows. With S4 and S5 plays an important role in translational accuracy. Functionally, interacts with and stabilizes bases of the 16S rRNA that are involved in tRNA selection in the A site and with the mRNA backbone. Located at the interface of the 30S and 50S subunits, it traverses the body of the 30S subunit contacting proteins on the other side and probably holding the rRNA structure together. The combined cluster of proteins S8, S12 and S17 appears to hold together the shoulder and platform of the 30S subunit. This is Small ribosomal subunit protein uS12 from Borrelia hermsii (strain HS1 / DAH).